Reading from the N-terminus, the 88-residue chain is Small ribosomal subunit protein uS17 (88 aa).

This sequence belongs to the universal ribosomal protein uS17 family. Part of the 30S ribosomal subunit.

Functionally, one of the primary rRNA binding proteins, it binds specifically to the 5'-end of 16S ribosomal RNA. In Hahella chejuensis (strain KCTC 2396), this protein is Small ribosomal subunit protein uS17.